The chain runs to 383 residues: Forkhead box protein I3-B (383 aa).

Residues 1-12 (MTSYESQGQSPT) are compositionally biased toward polar residues. Disordered regions lie at residues 1–55 (MTSY…YELG), 215–277 (DNGN…PCLS), and 317–348 (TTGF…SPSH). Positions 25 to 35 (PPELSLYSDSY) are enriched in low complexity. A DNA-binding region (fork-head) is located at residues 130-224 (RPPYSYSALI…DNGNFRRKRK (95 aa)). The short motif at 220–226 (RRKRKRK) is the Nuclear localization signal element. Over residues 234–249 (SSSGGNESGDSNGRGS) the composition is skewed to low complexity. Positions 250–277 (PKSQSIDISTSPEKGPSPASTGPSPCLS) are enriched in polar residues. Low complexity predominate over residues 317–330 (TTGFSTFTPSTTVS).

As to expression, expressed in ionocyte precursors.

It localises to the nucleus. Transcription factor required for epithelial cell differentiation. Involved in specification of skin ionocytes from epidermal precursors. The chain is Forkhead box protein I3-B from Danio rerio (Zebrafish).